The following is a 446-amino-acid chain: Exodeoxyribonuclease 7 large subunit (446 aa).

Belongs to the XseA family. Heterooligomer composed of large and small subunits.

It is found in the cytoplasm. The catalysed reaction is Exonucleolytic cleavage in either 5'- to 3'- or 3'- to 5'-direction to yield nucleoside 5'-phosphates.. Functionally, bidirectionally degrades single-stranded DNA into large acid-insoluble oligonucleotides, which are then degraded further into small acid-soluble oligonucleotides. In Staphylococcus carnosus (strain TM300), this protein is Exodeoxyribonuclease 7 large subunit.